Here is a 425-residue protein sequence, read N- to C-terminus: tRNA(Ile)-lysidine synthase (425 aa).

27–32 (SGGLDS) provides a ligand contact to ATP.

The protein belongs to the tRNA(Ile)-lysidine synthase family.

Its subcellular location is the cytoplasm. It catalyses the reaction cytidine(34) in tRNA(Ile2) + L-lysine + ATP = lysidine(34) in tRNA(Ile2) + AMP + diphosphate + H(+). Functionally, ligates lysine onto the cytidine present at position 34 of the AUA codon-specific tRNA(Ile) that contains the anticodon CAU, in an ATP-dependent manner. Cytidine is converted to lysidine, thus changing the amino acid specificity of the tRNA from methionine to isoleucine. This Streptococcus pneumoniae serotype 19F (strain G54) protein is tRNA(Ile)-lysidine synthase.